Reading from the N-terminus, the 388-residue chain is 5-hydroxytryptamine receptor 4 (388 aa).

Over 1-19 the chain is Extracellular; that stretch reads MDKLDANVSSKEGFGSVEK. N-linked (GlcNAc...) asparagine glycosylation is present at Asn-7. The helical transmembrane segment at 20 to 44 threads the bilayer; the sequence is VVLLTFLSAVILMAILGNLLVMVAV. The Cytoplasmic segment spans residues 45 to 54; it reads CRDRQLRKIK. Residues 55–78 traverse the membrane as a helical segment; sequence TNYFIVSLAFADLLVSVLVMPFGA. Residues 79 to 92 lie on the Extracellular side of the membrane; that stretch reads IELVQDIWVYGEMF. A helical membrane pass occupies residues 93–117; that stretch reads CLVRTSLDVLLTTASIFHLCCISLD. A disulfide bond links Cys-93 and Cys-184. Asp-100 provides a ligand contact to serotonin. Residues 118–133 lie on the Cytoplasmic side of the membrane; it reads RYYAICCQPLVYRNKM. Residues 134–157 traverse the membrane as a helical segment; sequence TPLRIALMLGGCWVIPMFISFLPI. Over 158 to 188 the chain is Extracellular; the sequence is MQGWNNIGIVDLIEKRKFNQNSNSTYCVFMV. The chain crosses the membrane as a helical span at residues 189–212; sequence NKPYAITCSVVAFYIPFLLMVLAY. Over 213-257 the chain is Cytoplasmic; that stretch reads YRIYVTAKEHARQIQVLQRAGAPAEGRPQPADQHSTHRMRTETKA. The chain crosses the membrane as a helical span at residues 258–283; it reads AKTLCIIMGCFCLCWAPFFVTNIVDP. Asn-279 contributes to the serotonin binding site. At 284 to 290 the chain is on the extracellular side; the sequence is FIDYTVP. The helical transmembrane segment at 291–314 threads the bilayer; that stretch reads GQLWTAFLWLGYINSGLNPFLYAF. Over 315 to 388 the chain is Cytoplasmic; sequence LNKSFRRAFL…PLVAAQPIDT (74 aa).

This sequence belongs to the G-protein coupled receptor 1 family. Interacts (via C-terminus 330-346 AA) with GRK5; this interaction is promoted by 5-HT (serotonin).

It localises to the cell membrane. It is found in the endosome membrane. Its function is as follows. G-protein coupled receptor for 5-hydroxytryptamine (serotonin), a biogenic hormone that functions as a neurotransmitter, a hormone and a mitogen. Ligand binding causes a conformation change that triggers signaling via guanine nucleotide-binding proteins (G proteins) and modulates the activity of downstream effectors. HTR4 is coupled to G(s) G alpha proteins and mediates activation of adenylate cyclase activity. In Cavia porcellus (Guinea pig), this protein is 5-hydroxytryptamine receptor 4 (HTR4).